The primary structure comprises 1077 residues: Ubiquitin carboxyl-terminal hydrolase 28 (1077 aa).

The segment at 60 to 80 is disordered; sequence DERVKEPSQDTVATEPSEVEG. Position 67 is a phosphoserine (Ser67). Residues 97 to 116 enclose the UIM domain; sequence DNKDDLQAAIALSLLESPKI. A Glycyl lysine isopeptide (Lys-Gly) (interchain with G-Cter in SUMO2) cross-link involves residue Lys99. One can recognise a USP domain in the interval 162–650; the sequence is VGLKNVGNTC…SAYCLMYIND (489 aa). Catalysis depends on Cys171, which acts as the Nucleophile. Ser375 carries the phosphoserine modification. The segment at 477 to 535 is disordered; the sequence is HCSVSDQTSKESTSTESSSQDVESTFSSPEDSLPKSKPLTSSRSSMEMPSQPAPRTVTD. Low complexity predominate over residues 481 to 501; that stretch reads SDQTSKESTSTESSSQDVEST. The segment covering 514-524 has biased composition (polar residues); the sequence is PLTSSRSSMEM. The residue at position 550 (Ser550) is a Phosphoserine. His600 acts as the Proton acceptor in catalysis. The tract at residues 697–728 is disordered; the sequence is EEQSCKIPQMESSTNSSSQDYSTSQEPSVASS. Residues 707–724 are compositionally biased toward low complexity; that stretch reads ESSTNSSSQDYSTSQEPS. Position 714 is a phosphoserine (Ser714). A Glycyl lysine isopeptide (Lys-Gly) (interchain with G-Cter in SUMO2) cross-link involves residue Lys759. At Thr1048 the chain carries Phosphothreonine.

It belongs to the peptidase C19 family. USP28 subfamily. As to quaternary structure, interacts with ZNF304. Interacts with PRKD1. Interacts with TP53BP1. Interacts with isoform 1 of FBXW7; following DNA damage, dissociates from FBXW7 leading to degradation of MYC. Degraded upon nickel ion level or hypoxia exposure. In terms of processing, phosphorylated upon DNA damage at Ser-67 and Ser-714, by ATM or ATR. Phosphorylated by PRKD1.

The protein localises to the nucleus. It localises to the nucleoplasm. It catalyses the reaction Thiol-dependent hydrolysis of ester, thioester, amide, peptide and isopeptide bonds formed by the C-terminal Gly of ubiquitin (a 76-residue protein attached to proteins as an intracellular targeting signal).. In terms of biological role, deubiquitinase involved in DNA damage response checkpoint and MYC proto-oncogene stability. Involved in DNA damage induced apoptosis by specifically deubiquitinating proteins of the DNA damage pathway such as CLSPN. Also involved in G2 DNA damage checkpoint, by deubiquitinating CLSPN, and preventing its degradation by the anaphase promoting complex/cyclosome (APC/C). In contrast, it does not deubiquitinate PLK1. Specifically deubiquitinates MYC in the nucleoplasm, leading to prevent MYC degradation by the proteasome: acts by specifically interacting with isoform 1 of FBXW7 (FBW7alpha) in the nucleoplasm and counteracting ubiquitination of MYC by the SCF(FBW7) complex. In contrast, it does not interact with isoform 4 of FBXW7 (FBW7gamma) in the nucleolus, allowing MYC degradation and explaining the selective MYC degradation in the nucleolus. Deubiquitinates ZNF304, hence preventing ZNF304 degradation by the proteasome and leading to the activated KRAS-mediated promoter hypermethylation and transcriptional silencing of tumor suppressor genes (TSGs) in a subset of colorectal cancers (CRC) cells. This chain is Ubiquitin carboxyl-terminal hydrolase 28 (USP28), found in Homo sapiens (Human).